Here is a 173-residue protein sequence, read N- to C-terminus: Probable DNA-directed RNA polymerase subunit delta (173 aa).

An HTH HARE-type domain is found at N14–W81. Positions L113–E173 are disordered. Acidic residues predominate over residues G115–E173.

It belongs to the RpoE family. As to quaternary structure, RNAP is composed of a core of 2 alpha, a beta and a beta' subunits. The core is associated with a delta subunit and one of several sigma factors.

Functionally, participates in both the initiation and recycling phases of transcription. In the presence of the delta subunit, RNAP displays an increased specificity of transcription, a decreased affinity for nucleic acids, and an increased efficiency of RNA synthesis because of enhanced recycling. The sequence is that of Probable DNA-directed RNA polymerase subunit delta from Macrococcus caseolyticus (strain JCSC5402) (Macrococcoides caseolyticum).